The sequence spans 227 residues: Cytochrome c oxidase subunit 2 (227 aa).

Residues methionine 1–serine 14 lie on the Mitochondrial intermembrane side of the membrane. Residues proline 15–methionine 45 form a helical membrane-spanning segment. Topologically, residues leucine 46 to glutamine 59 are mitochondrial matrix. The helical transmembrane segment at glutamate 60–methionine 87 threads the bilayer. Over aspartate 88–leucine 227 the chain is Mitochondrial intermembrane. 6 residues coordinate Cu cation: histidine 161, cysteine 196, glutamate 198, cysteine 200, histidine 204, and methionine 207. Glutamate 198 is a Mg(2+) binding site.

The protein belongs to the cytochrome c oxidase subunit 2 family. As to quaternary structure, component of the cytochrome c oxidase (complex IV, CIV), a multisubunit enzyme composed of 14 subunits. The complex is composed of a catalytic core of 3 subunits MT-CO1, MT-CO2 and MT-CO3, encoded in the mitochondrial DNA, and 11 supernumerary subunits COX4I, COX5A, COX5B, COX6A, COX6B, COX6C, COX7A, COX7B, COX7C, COX8 and NDUFA4, which are encoded in the nuclear genome. The complex exists as a monomer or a dimer and forms supercomplexes (SCs) in the inner mitochondrial membrane with NADH-ubiquinone oxidoreductase (complex I, CI) and ubiquinol-cytochrome c oxidoreductase (cytochrome b-c1 complex, complex III, CIII), resulting in different assemblies (supercomplex SCI(1)III(2)IV(1) and megacomplex MCI(2)III(2)IV(2)). Found in a complex with TMEM177, COA6, COX18, COX20, SCO1 and SCO2. Interacts with TMEM177 in a COX20-dependent manner. Interacts with COX20. Interacts with COX16. Requires Cu cation as cofactor.

It localises to the mitochondrion inner membrane. The enzyme catalyses 4 Fe(II)-[cytochrome c] + O2 + 8 H(+)(in) = 4 Fe(III)-[cytochrome c] + 2 H2O + 4 H(+)(out). Its function is as follows. Component of the cytochrome c oxidase, the last enzyme in the mitochondrial electron transport chain which drives oxidative phosphorylation. The respiratory chain contains 3 multisubunit complexes succinate dehydrogenase (complex II, CII), ubiquinol-cytochrome c oxidoreductase (cytochrome b-c1 complex, complex III, CIII) and cytochrome c oxidase (complex IV, CIV), that cooperate to transfer electrons derived from NADH and succinate to molecular oxygen, creating an electrochemical gradient over the inner membrane that drives transmembrane transport and the ATP synthase. Cytochrome c oxidase is the component of the respiratory chain that catalyzes the reduction of oxygen to water. Electrons originating from reduced cytochrome c in the intermembrane space (IMS) are transferred via the dinuclear copper A center (CU(A)) of subunit 2 and heme A of subunit 1 to the active site in subunit 1, a binuclear center (BNC) formed by heme A3 and copper B (CU(B)). The BNC reduces molecular oxygen to 2 water molecules using 4 electrons from cytochrome c in the IMS and 4 protons from the mitochondrial matrix. This is Cytochrome c oxidase subunit 2 (MT-CO2) from Gazella spekei (Speke's gazelle).